Consider the following 188-residue polypeptide: Putative manganese efflux pump MntP (188 aa).

The next 6 helical transmembrane spans lie at 1-21 (MLIQ…AVSI), 40-60 (LWFG…ASTF), 64-84 (VTAV…GNMV), 105-127 (HMLP…FAFM), 131-153 (IWLS…LYIG), and 166-186 (IAGG…HLGF).

This sequence belongs to the MntP (TC 9.B.29) family.

It is found in the cell membrane. In terms of biological role, probably functions as a manganese efflux pump. The polypeptide is Putative manganese efflux pump MntP (Bifidobacterium adolescentis (strain ATCC 15703 / DSM 20083 / NCTC 11814 / E194a)).